A 291-amino-acid polypeptide reads, in one-letter code: Pantothenate synthetase (291 aa).

An ATP-binding site is contributed by Met-30 to His-37. His-37 (proton donor) is an active-site residue. Gln-61 serves as a coordination point for (R)-pantoate. Residue Gln-61 coordinates beta-alanine. Gly-149–Asp-152 provides a ligand contact to ATP. Gln-155 is a binding site for (R)-pantoate. ATP is bound by residues Val-178 and Met-186–Arg-189.

Belongs to the pantothenate synthetase family. As to quaternary structure, homodimer.

The protein localises to the cytoplasm. It catalyses the reaction (R)-pantoate + beta-alanine + ATP = (R)-pantothenate + AMP + diphosphate + H(+). It functions in the pathway cofactor biosynthesis; (R)-pantothenate biosynthesis; (R)-pantothenate from (R)-pantoate and beta-alanine: step 1/1. Functionally, catalyzes the condensation of pantoate with beta-alanine in an ATP-dependent reaction via a pantoyl-adenylate intermediate. This Aliivibrio fischeri (strain ATCC 700601 / ES114) (Vibrio fischeri) protein is Pantothenate synthetase.